A 603-amino-acid chain; its full sequence is Myotubularin (603 aa).

A compositionally biased stretch (polar residues) spans 1-13; sequence MASASTSKYNSHS. A disordered region spans residues 1–25; the sequence is MASASTSKYNSHSLENESIKRTSRD. A phosphoserine mark is found at Ser13 and Ser18. Positions 14-25 are enriched in basic and acidic residues; that stretch reads LENESIKRTSRD. One can recognise a GRAM domain in the interval 29-97; that stretch reads RDLTEAVPRL…GVISRIEKMG (69 aa). A Myotubularin phosphatase domain is found at 163–538; the sequence is GWTVYNPVEE…RHLELWVNYY (376 aa). A 1,2-diacyl-sn-glycero-3-phospho-(1D-myo-inositol-3,5-bisphosphate) contacts are provided by Asn288, Asn313, and Ile314. A 1,2-diacyl-sn-glycero-3-phospho-(1D-myo-inositol-3-phosphate) contacts are provided by Asn288, Asn313, and Ile314. Cys375 serves as the catalytic Phosphocysteine intermediate. The a 1,2-diacyl-sn-glycero-3-phospho-(1D-myo-inositol-3,5-bisphosphate) site is built by Ser376, Asp377, Gly378, Trp379, Asp380, Arg381, Lys417, and Arg421. 6 residues coordinate a 1,2-diacyl-sn-glycero-3-phospho-(1D-myo-inositol-3-phosphate): Ser376, Asp377, Gly378, Trp379, Asp380, and Arg381. Arg421 contributes to the a 1,2-diacyl-sn-glycero-3-phospho-(1D-myo-inositol-3-phosphate) binding site. The residue at position 495 (Thr495) is a Phosphothreonine. The tract at residues 579–603 is disordered; it reads SAKLSDPPTSPSSPSQMMPHVQTHF. Ser588 carries the phosphoserine modification.

This sequence belongs to the protein-tyrosine phosphatase family. Non-receptor class myotubularin subfamily. As to quaternary structure, heterodimer with MTMR12. Interacts with KMT2A/MLL1 (via SET domain). Interacts with DES in skeletal muscle but not in cardiac muscle. Interacts with SPEG.

The protein localises to the cytoplasm. It is found in the cell membrane. It localises to the cell projection. Its subcellular location is the filopodium. The protein resides in the ruffle. The protein localises to the late endosome. It is found in the myofibril. It localises to the sarcomere. It catalyses the reaction a 1,2-diacyl-sn-glycero-3-phospho-(1D-myo-inositol-3-phosphate) + H2O = a 1,2-diacyl-sn-glycero-3-phospho-(1D-myo-inositol) + phosphate. The enzyme catalyses a 1,2-diacyl-sn-glycero-3-phospho-(1D-myo-inositol-3,5-bisphosphate) + H2O = a 1,2-diacyl-sn-glycero-3-phospho-(1D-myo-inositol-5-phosphate) + phosphate. It carries out the reaction 1,2-dioctanoyl-sn-glycero-3-phospho-(1-D-myo-inositol-3-phosphate) + H2O = 1,2-dioctanoyl-sn-glycero-3-phospho-(1D-myo-inositol) + phosphate. The catalysed reaction is 1,2-dioctanoyl-sn-glycero-3-phospho-(1D-myo-inositol-3,5-bisphosphate) + H2O = 1,2-dioctanoyl-sn-glycero-3-phospho-(1D-myo-inositol-5-phosphate) + phosphate. It catalyses the reaction 1,2-dihexadecanoyl-sn-glycero-3-phospho-(1D-myo-inositol-3,5-phosphate) + H2O = 1,2-dihexadecanoyl-sn-glycero-3-phospho-(1D-myo-inositol-5-phosphate) + phosphate. Its activity is regulated as follows. Allosterically activated by phosphatidylinositol 5-phosphate (PI5P). Functionally, lipid phosphatase which dephosphorylates phosphatidylinositol 3-monophosphate (PI3P) and phosphatidylinositol 3,5-bisphosphate (PI(3,5)P2). Has also been shown to dephosphorylate phosphotyrosine- and phosphoserine-containing peptides. Negatively regulates EGFR degradation through regulation of EGFR trafficking from the late endosome to the lysosome. Plays a role in vacuolar formation and morphology. Regulates desmin intermediate filament assembly and architecture. Plays a role in mitochondrial morphology and positioning. Required for skeletal muscle maintenance but not for myogenesis. In skeletal muscles, stabilizes MTMR12 protein levels. The protein is Myotubularin of Homo sapiens (Human).